The chain runs to 186 residues: Translation initiation factor IF-3 (186 aa).

It belongs to the IF-3 family. Monomer.

It localises to the cytoplasm. Its function is as follows. IF-3 binds to the 30S ribosomal subunit and shifts the equilibrium between 70S ribosomes and their 50S and 30S subunits in favor of the free subunits, thus enhancing the availability of 30S subunits on which protein synthesis initiation begins. This chain is Translation initiation factor IF-3, found in Borreliella burgdorferi (strain ATCC 35210 / DSM 4680 / CIP 102532 / B31) (Borrelia burgdorferi).